The primary structure comprises 416 residues: Gamma-glutamyl phosphate reductase (416 aa).

The protein belongs to the gamma-glutamyl phosphate reductase family.

It is found in the cytoplasm. The catalysed reaction is L-glutamate 5-semialdehyde + phosphate + NADP(+) = L-glutamyl 5-phosphate + NADPH + H(+). It participates in amino-acid biosynthesis; L-proline biosynthesis; L-glutamate 5-semialdehyde from L-glutamate: step 2/2. In terms of biological role, catalyzes the NADPH-dependent reduction of L-glutamate 5-phosphate into L-glutamate 5-semialdehyde and phosphate. The product spontaneously undergoes cyclization to form 1-pyrroline-5-carboxylate. The protein is Gamma-glutamyl phosphate reductase of Vibrio parahaemolyticus serotype O3:K6 (strain RIMD 2210633).